The following is a 175-amino-acid chain: Beta-carotene hydroxylase (175 aa).

The Fatty acid hydroxylase domain maps to 11-136 (FVTVIGMEVI…RGKEGCVSFG (126 aa)).

This sequence belongs to the sterol desaturase family.

It catalyses the reaction all-trans-beta-carotene + 4 reduced [2Fe-2S]-[ferredoxin] + 2 O2 + 4 H(+) = all-trans-zeaxanthin + 4 oxidized [2Fe-2S]-[ferredoxin] + 2 H2O. It participates in carotenoid biosynthesis; zeaxanthin biosynthesis. In terms of biological role, catalyzes the hydroxylation reaction from beta-carotene to zeaxanthin. This Pantoea ananas (Erwinia uredovora) protein is Beta-carotene hydroxylase (crtZ).